We begin with the raw amino-acid sequence, 291 residues long: Ribose-phosphate pyrophosphokinase (291 aa).

Residues 34-36 (DGE) and 92-93 (RQ) contribute to the ATP site. His-125 and Asp-165 together coordinate Mg(2+). Residue Lys-188 is part of the active site. Residues Arg-190 and Asp-214 each coordinate D-ribose 5-phosphate.

This sequence belongs to the ribose-phosphate pyrophosphokinase family. Class III (archaeal) subfamily. Requires Mg(2+) as cofactor.

It is found in the cytoplasm. The catalysed reaction is D-ribose 5-phosphate + ATP = 5-phospho-alpha-D-ribose 1-diphosphate + AMP + H(+). The protein operates within metabolic intermediate biosynthesis; 5-phospho-alpha-D-ribose 1-diphosphate biosynthesis; 5-phospho-alpha-D-ribose 1-diphosphate from D-ribose 5-phosphate (route I): step 1/1. Functionally, involved in the biosynthesis of the central metabolite phospho-alpha-D-ribosyl-1-pyrophosphate (PRPP) via the transfer of pyrophosphoryl group from ATP to 1-hydroxyl of ribose-5-phosphate (Rib-5-P). In Methanopyrus kandleri (strain AV19 / DSM 6324 / JCM 9639 / NBRC 100938), this protein is Ribose-phosphate pyrophosphokinase.